Reading from the N-terminus, the 534-residue chain is Pentatricopeptide repeat-containing protein At2g20540 (534 aa).

PPR repeat units lie at residues 41 to 71 (SSFM…VSNP), 72 to 106 (NVFL…SFEL), 108 to 142 (DRFT…GPRF), 143 to 173 (HVVT…MYER), 174 to 208 (DVIS…TIVS), 209 to 239 (WTAM…GIEP), 240 to 274 (DEIS…GFLK), 275 to 305 (QTGV…MEGK), 306 to 340 (DVIS…KVKP), 341 to 371 (NGIT…MRQD), and 377 to 407 (KIEH…MPMK). The interval 412-487 (IWGSLLSSCR…TPGGSLIEVN (76 aa)) is type E motif. Positions 488-518 (NIVQEFVSGDNSKPFWTEISIVLQLFTSHQD) are type E(+) motif.

It belongs to the PPR family. PCMP-E subfamily.

This is Pentatricopeptide repeat-containing protein At2g20540 (PCMP-E78) from Arabidopsis thaliana (Mouse-ear cress).